A 342-amino-acid polypeptide reads, in one-letter code: Adenylate isopentenyltransferase 6, chloroplastic (342 aa).

A chloroplast-targeting transit peptide spans 1–33 (MQQLMTLLSPPLSHSSLLPTVTTKFGSPRLVTT). 52–59 (GTTGTGKS) serves as a coordination point for ATP.

It belongs to the IPP transferase family. In terms of tissue distribution, expressed in siliques, at the mRNA level.

Its subcellular location is the plastid. The protein localises to the chloroplast. The enzyme catalyses dimethylallyl diphosphate + ADP = N(6)-(dimethylallyl)adenosine 5'-diphosphate + diphosphate. The catalysed reaction is dimethylallyl diphosphate + ATP = N(6)-(dimethylallyl)adenosine 5'-triphosphate + diphosphate. In terms of biological role, involved in cytokinin biosynthesis. Catalyzes the transfer of an isopentenyl group from dimethylallyl diphosphate (DMAPP) to ATP and ADP. The sequence is that of Adenylate isopentenyltransferase 6, chloroplastic (IPT6) from Arabidopsis thaliana (Mouse-ear cress).